We begin with the raw amino-acid sequence, 702 residues long: Ribosomal RNA large subunit methyltransferase K/L (702 aa).

One can recognise a THUMP domain in the interval 43 to 154 (LVYQSLMWSR…KETASIALDL (112 aa)).

The protein belongs to the methyltransferase superfamily. RlmKL family.

Its subcellular location is the cytoplasm. The enzyme catalyses guanosine(2445) in 23S rRNA + S-adenosyl-L-methionine = N(2)-methylguanosine(2445) in 23S rRNA + S-adenosyl-L-homocysteine + H(+). It catalyses the reaction guanosine(2069) in 23S rRNA + S-adenosyl-L-methionine = N(2)-methylguanosine(2069) in 23S rRNA + S-adenosyl-L-homocysteine + H(+). Its function is as follows. Specifically methylates the guanine in position 2445 (m2G2445) and the guanine in position 2069 (m7G2069) of 23S rRNA. The polypeptide is Ribosomal RNA large subunit methyltransferase K/L (Escherichia coli (strain SMS-3-5 / SECEC)).